The sequence spans 32 residues: Periplasmic [NiFeSe] hydrogenase small subunit (32 aa).

[4Fe-4S] cluster-binding residues include cysteine 18 and cysteine 21.

This sequence belongs to the [NiFe]/[NiFeSe] hydrogenase small subunit family. In terms of assembly, heterodimer of a large and a small subunit. The cofactor is [3Fe-4S] cluster. [4Fe-4S] cluster is required as a cofactor.

It is found in the periplasm. It carries out the reaction H2 + A = AH2. This is Periplasmic [NiFeSe] hydrogenase small subunit from Desulfomicrobium norvegicum (strain DSM 1741 / NCIMB 8310) (Desulfovibrio baculatus (strain Norway 4)).